The following is a 237-amino-acid chain: Uridylate kinase (237 aa).

9–12 contributes to the ATP binding site; that stretch reads KLSG. An involved in allosteric activation by GTP region spans residues 17 to 22; the sequence is GSQGYG. Glycine 51 contributes to the UMP binding site. Positions 52 and 56 each coordinate ATP. UMP-binding positions include aspartate 71 and 132 to 139; that span reads CGNPFFTT. 3 residues coordinate ATP: threonine 159, tyrosine 165, and aspartate 168.

This sequence belongs to the UMP kinase family. Homohexamer.

It is found in the cytoplasm. It carries out the reaction UMP + ATP = UDP + ADP. The protein operates within pyrimidine metabolism; CTP biosynthesis via de novo pathway; UDP from UMP (UMPK route): step 1/1. Its activity is regulated as follows. Allosterically activated by GTP. Inhibited by UTP. Catalyzes the reversible phosphorylation of UMP to UDP. The sequence is that of Uridylate kinase from Synechococcus sp. (strain CC9605).